The sequence spans 444 residues: MSYSRGGTLVTLLLLLVVASSLALTANANSFESLLQLPRRQSRSTRPRSERLLHVGNFGAKGNGVTDDTKAFADAWKTACSSKVKTRILVPENYTCLLRPIDLSGPCKARLTLQISGTIIAPNDPDVWEGLNRRKWLYFHGLSRLTVEGGGTVNGMGQEWWERSCKHNHSNPCRGAPTALTFHKCKNMRVENLNVIDSQQMHIALTSCRRVTISGLKVIAPATSPNTDGIHISVSRGIVIDNTTVSTGDDCISIVKNSTQISISNIICGPGHGISIGSLGKSKSWEEVRDITVDTAIISDTANGVRIKTWQGGSGLVSKIIFRNIKMNNVSNPIIIDQYYCDSRKPCANQTSAISIENISFVHVRGTSASKEAIKISCSDSSPCRNILLQDIDLEPSNGDGFTESFCWEAYGSSSGQVYPPPCLSDDTSFLEQSVQSGITSAYL.

Residues 1 to 28 (MSYSRGGTLVTLLLLLVVASSLALTANA) form the signal peptide. PbH1 repeat units follow at residues 208-234 (CRRV…HISV), 235-256 (SRGI…SIVK), 258-278 (STQI…SIGS), 288-309 (VRDI…RIKT), 317-338 (VSKI…IIDQ), and 351-378 (TSAI…KISC). The Proton donor role is filled by aspartate 249. The active site involves histidine 272.

This sequence belongs to the glycosyl hydrolase 28 family. As to expression, expressed in young, mature and dehiscing anthers. Found in stems, but not in roots or in abscission zone of floral organs.

Its subcellular location is the secreted. The protein localises to the cell wall. The catalysed reaction is (1,4-alpha-D-galacturonosyl)n+m + H2O = (1,4-alpha-D-galacturonosyl)n + (1,4-alpha-D-galacturonosyl)m.. The protein is Probable polygalacturonase At1g80170 of Arabidopsis thaliana (Mouse-ear cress).